We begin with the raw amino-acid sequence, 463 residues long: Glutamate--tRNA ligase (463 aa).

The 'HIGH' region signature appears at 8–18 (PSPTGYLHIGG). The 'KMSKS' region signature appears at 236–240 (RLSKR). K239 serves as a coordination point for ATP.

The protein belongs to the class-I aminoacyl-tRNA synthetase family. Glutamate--tRNA ligase type 1 subfamily. Monomer.

The protein resides in the cytoplasm. The catalysed reaction is tRNA(Glu) + L-glutamate + ATP = L-glutamyl-tRNA(Glu) + AMP + diphosphate. In terms of biological role, catalyzes the attachment of glutamate to tRNA(Glu) in a two-step reaction: glutamate is first activated by ATP to form Glu-AMP and then transferred to the acceptor end of tRNA(Glu). This chain is Glutamate--tRNA ligase, found in Nitrosomonas eutropha (strain DSM 101675 / C91 / Nm57).